The following is a 129-amino-acid chain: Large ribosomal subunit protein bL19 (129 aa).

It belongs to the bacterial ribosomal protein bL19 family.

Its function is as follows. This protein is located at the 30S-50S ribosomal subunit interface and may play a role in the structure and function of the aminoacyl-tRNA binding site. This chain is Large ribosomal subunit protein bL19, found in Rhizorhabdus wittichii (strain DSM 6014 / CCUG 31198 / JCM 15750 / NBRC 105917 / EY 4224 / RW1) (Sphingomonas wittichii).